A 63-amino-acid chain; its full sequence is Small ribosomal subunit protein uS14 (63 aa).

Residues Cys-26, Cys-29, Cys-42, and Cys-45 each contribute to the Zn(2+) site.

It belongs to the universal ribosomal protein uS14 family. Zinc-binding uS14 subfamily. As to quaternary structure, part of the 30S ribosomal subunit. Contacts proteins S3 and S10. Zn(2+) serves as cofactor.

Its function is as follows. Binds 16S rRNA, required for the assembly of 30S particles and may also be responsible for determining the conformation of the 16S rRNA at the A site. This is Small ribosomal subunit protein uS14 from Gloeobacter violaceus (strain ATCC 29082 / PCC 7421).